The chain runs to 361 residues: Histidinol-phosphate aminotransferase (361 aa).

Position 218 is an N6-(pyridoxal phosphate)lysine (lysine 218).

It belongs to the class-II pyridoxal-phosphate-dependent aminotransferase family. Histidinol-phosphate aminotransferase subfamily. Homodimer. Requires pyridoxal 5'-phosphate as cofactor.

The enzyme catalyses L-histidinol phosphate + 2-oxoglutarate = 3-(imidazol-4-yl)-2-oxopropyl phosphate + L-glutamate. The protein operates within amino-acid biosynthesis; L-histidine biosynthesis; L-histidine from 5-phospho-alpha-D-ribose 1-diphosphate: step 7/9. This Ruegeria pomeroyi (strain ATCC 700808 / DSM 15171 / DSS-3) (Silicibacter pomeroyi) protein is Histidinol-phosphate aminotransferase.